The chain runs to 291 residues: ATP synthase gamma chain (291 aa).

Belongs to the ATPase gamma chain family. In terms of assembly, F-type ATPases have 2 components, CF(1) - the catalytic core - and CF(0) - the membrane proton channel. CF(1) has five subunits: alpha(3), beta(3), gamma(1), delta(1), epsilon(1). CF(0) has three main subunits: a, b and c.

The protein localises to the cell membrane. Its function is as follows. Produces ATP from ADP in the presence of a proton gradient across the membrane. The gamma chain is believed to be important in regulating ATPase activity and the flow of protons through the CF(0) complex. This Streptococcus pyogenes serotype M1 protein is ATP synthase gamma chain.